The primary structure comprises 354 residues: uncharacterized protein (354 aa).

A signal peptide spans 1–21 (MRYLLIVITFFMGFSSLPAWA).

The protein to E.coli YbgO.

Functionally, may be involved in a fimbrial system chaperoned by YqiH and exported by YqiG. This is an uncharacterized protein from Escherichia coli (strain K12).